We begin with the raw amino-acid sequence, 495 residues long: Syntaphilin (495 aa).

The segment at 1–74 (MAMSLQGSRR…HGIKPPTPEQ (74 aa)) is disordered. The segment covering 7 to 49 (GSRRASAGSRRRTSPPVSVRDAYGTSSLSSSSNSGSCKGSDSS) has biased composition (low complexity). The stretch at 79–161 (LQQKEVCIRH…VKNNLIDKDK (83 aa)) forms a coiled coil. A disordered region spans residues 191–244 (VAKEEGTGESAGGSPARSLTRSSTYTKLSDPAVCGDRQPGDPSNTSAEDGADSG). Phosphoserine is present on residues Ser200 and Ser204. Over residues 207–217 (RSLTRSSTYTK) the composition is skewed to polar residues. Thr214 bears the Phosphothreonine mark. At Ser219 the chain carries Phosphoserine. Phosphothreonine is present on Thr235. The helical transmembrane segment at 427–446 (YIVDLLAVVVPAVPTVAWLC) threads the bilayer.

Binds to STX1A. Interacts with DNM1; this interaction inhibits the binding of DNM1 to AMPH and DNM1-receptor-mediated endocytosis.

The protein resides in the membrane. The protein localises to the synapse. It is found in the synaptosome. In terms of biological role, inhibits SNARE complex formation by absorbing free STX1A. This chain is Syntaphilin, found in Mus musculus (Mouse).